Here is a 319-residue protein sequence, read N- to C-terminus: MQNRNTYDLKKKMTRLISVLVMIHIITRTSISNAYPIFAQQGYENPREATGRIVCANCHLAKKPVDIEGPQSVLPNTVFEAVVKIPYDTQMKQVLANGKKGALNVGAVLILPEGFELAPPDRISPEIRQKMGNLYFQNYRPNQKNIIVIGPVPGQKYSELVFPILSPDPATDKEAHFLKYPIYLGGNRGRGQIYPDGSKSNNTVYSASATGRVSKILRKEKGGYEITIDNTSDGGQVVDIVPPGPELLISEGELIKVDQPLTNNPNVGGFGQGDAEIVLQDPLRVKGLLLFLASVILAQIFLVLKKKQFEKVQLAEMNL.

Residues 1 to 34 form the signal peptide; sequence MQNRNTYDLKKKMTRLISVLVMIHIITRTSISNA. Heme is bound by residues Y35, C55, C58, and H59. Residues 285–304 traverse the membrane as a helical segment; it reads VKGLLLFLASVILAQIFLVL.

Belongs to the cytochrome f family. As to quaternary structure, the 4 large subunits of the cytochrome b6-f complex are cytochrome b6, subunit IV (17 kDa polypeptide, petD), cytochrome f and the Rieske protein, while the 4 small subunits are PetG, PetL, PetM and PetN. The complex functions as a dimer. Heme is required as a cofactor.

The protein localises to the plastid. The protein resides in the chloroplast thylakoid membrane. Functionally, component of the cytochrome b6-f complex, which mediates electron transfer between photosystem II (PSII) and photosystem I (PSI), cyclic electron flow around PSI, and state transitions. This chain is Cytochrome f (petA), found in Picea abies (Norway spruce).